Here is a 502-residue protein sequence, read N- to C-terminus: UDP-N-acetylmuramate--L-alanine ligase (502 aa).

Position 120–126 (120–126 (GTHGKTS)) interacts with ATP.

It belongs to the MurCDEF family.

The protein resides in the cytoplasm. The enzyme catalyses UDP-N-acetyl-alpha-D-muramate + L-alanine + ATP = UDP-N-acetyl-alpha-D-muramoyl-L-alanine + ADP + phosphate + H(+). Its pathway is cell wall biogenesis; peptidoglycan biosynthesis. Functionally, cell wall formation. This is UDP-N-acetylmuramate--L-alanine ligase from Rhodococcus erythropolis (strain PR4 / NBRC 100887).